The sequence spans 263 residues: Hydroxyethylthiazole kinase (263 aa).

Met45 is a substrate binding site. Positions 121 and 167 each coordinate ATP. Gly194 is a substrate binding site.

This sequence belongs to the Thz kinase family. It depends on Mg(2+) as a cofactor.

It catalyses the reaction 5-(2-hydroxyethyl)-4-methylthiazole + ATP = 4-methyl-5-(2-phosphooxyethyl)-thiazole + ADP + H(+). It functions in the pathway cofactor biosynthesis; thiamine diphosphate biosynthesis; 4-methyl-5-(2-phosphoethyl)-thiazole from 5-(2-hydroxyethyl)-4-methylthiazole: step 1/1. Catalyzes the phosphorylation of the hydroxyl group of 4-methyl-5-beta-hydroxyethylthiazole (THZ). The polypeptide is Hydroxyethylthiazole kinase (Vibrio campbellii (strain ATCC BAA-1116)).